A 94-amino-acid polypeptide reads, in one-letter code: Large ribosomal subunit protein bL27 (94 aa).

A propeptide spanning residues M1–F9 is cleaved from the precursor.

It belongs to the bacterial ribosomal protein bL27 family. Post-translationally, the N-terminus is cleaved by ribosomal processing cysteine protease Prp.

In Staphylococcus haemolyticus (strain JCSC1435), this protein is Large ribosomal subunit protein bL27.